The following is a 326-amino-acid chain: 4-hydroxythreonine-4-phosphate dehydrogenase (326 aa).

Thr132 provides a ligand contact to substrate. 3 residues coordinate a divalent metal cation: His160, His205, and His260. 3 residues coordinate substrate: Lys268, Asn277, and Arg286.

This sequence belongs to the PdxA family. As to quaternary structure, homodimer. Zn(2+) is required as a cofactor. The cofactor is Mg(2+). Requires Co(2+) as cofactor.

The protein resides in the cytoplasm. It catalyses the reaction 4-(phosphooxy)-L-threonine + NAD(+) = 3-amino-2-oxopropyl phosphate + CO2 + NADH. Its pathway is cofactor biosynthesis; pyridoxine 5'-phosphate biosynthesis; pyridoxine 5'-phosphate from D-erythrose 4-phosphate: step 4/5. Its function is as follows. Catalyzes the NAD(P)-dependent oxidation of 4-(phosphooxy)-L-threonine (HTP) into 2-amino-3-oxo-4-(phosphooxy)butyric acid which spontaneously decarboxylates to form 3-amino-2-oxopropyl phosphate (AHAP). This chain is 4-hydroxythreonine-4-phosphate dehydrogenase, found in Stenotrophomonas maltophilia (strain R551-3).